The chain runs to 473 residues: MRRGERRVAGGSGSESPLLKGRRSTESEVYDDGTNTFFWRAHTLTVLFILTCALGYVTLLEETPQDTAYNTKRGIVASILVFLCFGVTQAKDGPFSRPHPAYWRFWLCVSVVYELFLIFILFQTVQDGRQFLKYVDPRLGVPLPERDYGGNCLIYDADNKTDPFHNIWDKLDGFVPAHFIGWYLKTLMIRDWWMCMIISVMFEFLEYSLEHQLPNFSECWWDHWIMDVLVCNGLGIYCGMKTLEWLSLKTYKWQGLWNIPTYKGKMKRIAFQFTPYSWVRFEWKPASSLHRWLAVCGIILVFLLAELNTFYLKFVLWMPPEHYLVLLRLVFFVNVGGVAMREIYDFMDELKPHRKLGQQAWLVAAITVTELLIVVKYDPHTLTLSLPFYISQCWTLGSILVLTWTVWRFFLRDITMRYKETRRQKQQSHQARAVNNRDGHPGPDDDLLGTGTAEEEGTTNDGVTAEEGTSAAS.

The segment at 1-25 (MRRGERRVAGGSGSESPLLKGRRST) is disordered. At 1 to 40 (MRRGERRVAGGSGSESPLLKGRRSTESEVYDDGTNTFFWR) the chain is on the cytoplasmic side. Ser-12, Ser-14, and Ser-16 each carry phosphoserine. The chain crosses the membrane as a helical span at residues 41 to 61 (AHTLTVLFILTCALGYVTLLE). The Lumenal segment spans residues 62-74 (ETPQDTAYNTKRG). The chain crosses the membrane as a helical span at residues 75–95 (IVASILVFLCFGVTQAKDGPF). At 96–104 (SRPHPAYWR) the chain is on the cytoplasmic side. A helical transmembrane segment spans residues 105-125 (FWLCVSVVYELFLIFILFQTV). Over 126–291 (QDGRQFLKYV…EWKPASSLHR (166 aa)) the chain is Lumenal. Asn-159 is a glycosylation site (N-linked (GlcNAc...) asparagine). The helical transmembrane segment at 292–312 (WLAVCGIILVFLLAELNTFYL) threads the bilayer. Position 313 (Lys-313) is a topological domain, cytoplasmic. The chain crosses the membrane as a helical span at residues 314–334 (FVLWMPPEHYLVLLRLVFFVN). At 335-354 (VGGVAMREIYDFMDELKPHR) the chain is on the lumenal side. Residues 355 to 375 (KLGQQAWLVAAITVTELLIVV) traverse the membrane as a helical segment. The Cytoplasmic segment spans residues 376-381 (KYDPHT). Residues 382 to 402 (LTLSLPFYISQCWTLGSILVL) traverse the membrane as a helical segment. Topologically, residues 403–473 (TWTVWRFFLR…TAEEGTSAAS (71 aa)) are lumenal. The tract at residues 422–473 (RRQKQQSHQARAVNNRDGHPGPDDDLLGTGTAEEEGTTNDGVTAEEGTSAAS) is disordered.

It belongs to the phosphatidyl serine synthase family. In terms of tissue distribution, highly expressed in testis. Detected at lower levels in kidney and heart.

Its subcellular location is the endoplasmic reticulum membrane. It localises to the membrane. The catalysed reaction is a 1,2-diacyl-sn-glycero-3-phosphoethanolamine + L-serine = a 1,2-diacyl-sn-glycero-3-phospho-L-serine + ethanolamine. It carries out the reaction 1-hexadecanoyl-2-(9Z-octadecenoyl)-sn-glycero-3-phosphoethanolamine + L-serine = 1-hexadecanoyl-2-(9Z-octadecenoyl)-sn-glycero-3-phospho-L-serine + ethanolamine. The enzyme catalyses 1-hexadecanoyl-2-(4Z,7Z,10Z,13Z,16Z,19Z-docosahexaenoyl)-sn-glycero-3-phosphoethanolamine + L-serine = 1-hexadecanoyl-2-(4Z,7Z,10Z,13Z,16Z,19Z-docosahexaenoyl)-sn-glycero-3-phosphoserine + ethanolamine. It catalyses the reaction 1-octadecanoyl-2-(5Z,8Z,11Z,14Z)-eicosatetraenoyl-sn-glycero-3-phosphoethanolamine + L-serine = 1-octadecanoyl-2-(5Z,8Z,11Z,14Z)-eicosatetraenoyl-sn-glycero-3-phosphoserine + ethanolamine. The catalysed reaction is 1-octadecanoyl-2-(4Z,7Z,10Z,13Z,16Z,19Z-docosahexaenoyl)-sn-glycero-3-phosphoethanolamine + L-serine = 1-octadecanoyl-2-(4Z,7Z,10Z,13Z,16Z,19Z-docosahexaenoyl)-sn-glycero-3-phosphoserine + ethanolamine. It carries out the reaction 1-(1Z-octadecenyl)-2-(4Z,7Z,10Z,13Z,16Z,19Z-docosahexaenoyl)-sn-glycero-3-phosphoethanolamine + L-serine = 1-(1Z-octadecenyl)-2-(4Z,7Z,10Z,13Z,16Z,19Z-docosahexaenoyl)-sn-glycero-3-phospho-L-serine + ethanolamine. The enzyme catalyses 1-octadecanoyl-2-(9Z-octadecenoyl)-sn-glycero-3-phosphoethanolamine + L-serine = 1-octadecanoyl-2-(9Z-octadecenoyl)-sn-glycero-3-phospho-L-serine + ethanolamine. It catalyses the reaction 1-(1Z-octadecenyl)-2-(9Z-octadecenoyl)-sn-glycero-3-phosphoethanolamine + L-serine = 1-(1Z-octadecenyl)-2-(9Z-octadecenoyl)-sn-glycero-3-phospho-L-serine + ethanolamine. The catalysed reaction is 1-(1Z-octadecenyl)-2-(5Z,8Z,11Z,14Z- eicosatetraenoyl)-sn-glycero-3-phosphoethanolamine + L-serine = 1-(1Z-octadecenyl)-2-(5Z,8Z,11Z,14Z-eicosatetraenoyl)-sn-glycero-3-phospho-L-serine + ethanolamine. It functions in the pathway phospholipid metabolism; phosphatidylserine biosynthesis. Its activity is regulated as follows. Almost complete inhibition by ethanolamine in both the mitochondria-associated membrane (MAM) and endoplasmic reticulum (ER) per se. Its function is as follows. Catalyzes a base-exchange reaction in which the polar head group of phosphatidylethanolamine (PE) or phosphatidylcholine (PC) is replaced by L-serine. Catalyzes the conversion of phosphatatidylethanolamine and does not act on phosphatidylcholine. Can utilize both phosphatidylethanolamine (PE) plasmalogen and diacyl PE as substrate and the latter is six times better utilized, indicating the importance of an ester linkage at the sn-1 position. Although it shows no sn-1 fatty acyl preference, exhibits significant preference towards docosahexaenoic acid (22:6n-3) compared with 18:1 or 20:4 at the sn-2 position. The chain is Phosphatidylserine synthase 2 (Ptdss2) from Mus musculus (Mouse).